The primary structure comprises 175 residues: Bifunctional protein PyrR (175 aa).

Positions 97-109 match the PRPP-binding motif; the sequence is IVLIDDVLFTGRT.

Belongs to the purine/pyrimidine phosphoribosyltransferase family. PyrR subfamily. As to quaternary structure, homodimer and homohexamer; in equilibrium.

It catalyses the reaction UMP + diphosphate = 5-phospho-alpha-D-ribose 1-diphosphate + uracil. Regulates transcriptional attenuation of the pyrimidine nucleotide (pyr) operon by binding in a uridine-dependent manner to specific sites on pyr mRNA. This disrupts an antiterminator hairpin in the RNA and favors formation of a downstream transcription terminator, leading to a reduced expression of downstream genes. Its function is as follows. Also displays a weak uracil phosphoribosyltransferase activity which is not physiologically significant. The chain is Bifunctional protein PyrR from Leuconostoc mesenteroides subsp. mesenteroides (strain ATCC 8293 / DSM 20343 / BCRC 11652 / CCM 1803 / JCM 6124 / NCDO 523 / NBRC 100496 / NCIMB 8023 / NCTC 12954 / NRRL B-1118 / 37Y).